Reading from the N-terminus, the 397-residue chain is Arginine biosynthesis bifunctional protein ArgJ (397 aa).

Residues T147, K173, T184, E270, N392, and T397 each contribute to the substrate site. T184 (nucleophile) is an active-site residue.

It belongs to the ArgJ family. In terms of assembly, heterotetramer of two alpha and two beta chains.

The protein resides in the cytoplasm. The enzyme catalyses N(2)-acetyl-L-ornithine + L-glutamate = N-acetyl-L-glutamate + L-ornithine. It catalyses the reaction L-glutamate + acetyl-CoA = N-acetyl-L-glutamate + CoA + H(+). The protein operates within amino-acid biosynthesis; L-arginine biosynthesis; L-ornithine and N-acetyl-L-glutamate from L-glutamate and N(2)-acetyl-L-ornithine (cyclic): step 1/1. It participates in amino-acid biosynthesis; L-arginine biosynthesis; N(2)-acetyl-L-ornithine from L-glutamate: step 1/4. Its function is as follows. Catalyzes two activities which are involved in the cyclic version of arginine biosynthesis: the synthesis of N-acetylglutamate from glutamate and acetyl-CoA as the acetyl donor, and of ornithine by transacetylation between N(2)-acetylornithine and glutamate. The chain is Arginine biosynthesis bifunctional protein ArgJ from Streptococcus thermophilus (strain ATCC BAA-250 / LMG 18311).